The sequence spans 363 residues: UV excision repair protein RAD23 homolog A (363 aa).

In terms of domain architecture, Ubiquitin-like spans 1–81; sequence MAVTITLKTL…VVVMVTKTKA (81 aa). Positions 81 to 160 are disordered; sequence AGQGTSAPPE…EDAASTLVTG (80 aa). Residues 85–103 show a composition bias toward low complexity; that stretch reads TSAPPEASPTAAPESSTSF. A Glycyl lysine isopeptide (Lys-Gly) (interchain with G-Cter in ubiquitin) cross-link involves residue K122. 5 positions are modified to phosphoserine: S123, S128, S133, S136, and S138. The segment covering 126–147 has biased composition (low complexity); it reads EESAPTTSPESVSGSVPSSGSS. Positions 161 to 201 constitute a UBA 1 domain; it reads SEYETMLTEIMSMGYERERVVAALRASYNNPHRAVEYLLTG. Positions 203 to 227 are disordered; sequence PGSPEPEHGSVQESQVSEQPATEAA. S205 carries the post-translational modification Phosphoserine. The span at 213-222 shows a compositional bias: polar residues; it reads VQESQVSEQP. A phosphoserine mark is found at S295 and S357. The UBA 2 domain occupies 318–358; sequence PQEKEAIERLKALGFPESLVIQAYFACEKNENLAANFLLSQ. Positions 319–363 are HIV-1 vpr binding; sequence QEKEAIERLKALGFPESLVIQAYFACEKNENLAANFLLSQNFDDE.

This sequence belongs to the RAD23 family. As to quaternary structure, interacts with XPC; the interaction is suggesting the existence of a functional equivalent variant XPC complex. Interacts with PSMD4 and PSMC5. Interacts with ATXN3. Interacts with UBQLN2. In terms of assembly, (Microbial infection) Interacts with HIV-1 Vpr.

The protein localises to the nucleus. Functionally, multiubiquitin chain receptor involved in modulation of proteasomal degradation. Binds to 'Lys-48'-linked polyubiquitin chains in a length-dependent manner and with a lower affinity to 'Lys-63'-linked polyubiquitin chains. Proposed to be capable to bind simultaneously to the 26S proteasome and to polyubiquitinated substrates and to deliver ubiquitinated proteins to the proteasome. Involved in nucleotide excision repair and is thought to be functional equivalent for RAD23B in global genome nucleotide excision repair (GG-NER) by association with XPC. In vitro, the XPC:RAD23A dimer has NER activity. Can stabilize XPC. In terms of biological role, (Microbial infection) Involved in Vpr-dependent replication of HIV-1 in non-proliferating cells and primary macrophages. Required for the association of HIV-1 Vpr with the host proteasome. This Homo sapiens (Human) protein is UV excision repair protein RAD23 homolog A (RAD23A).